We begin with the raw amino-acid sequence, 251 residues long: Regulator of G-protein signaling 9-binding protein B (251 aa).

The Cytoplasmic segment spans residues 1–230; that stretch reads MPLQNVKVAD…NSKGCCSDGQ (230 aa). Coiled-coil stretches lie at residues 52–94 and 158–187; these read HLRD…ELER and ANKA…MKVN. A helical; Anchor for type IV membrane protein membrane pass occupies residues 231-250; the sequence is LIVFLLLCGTALVAITLYSI. Leucine 251 is a topological domain (extracellular).

Belongs to the RGS7BP/RGS9BP family.

Its subcellular location is the membrane. Functionally, regulator of G protein-coupled receptor (GPCR) signaling. Probably acts by regulating the activity of some 'R7' family protein (RGS6, RGS7, RGS9 and/or RGS11). The chain is Regulator of G-protein signaling 9-binding protein B (rgs9bp-b) from Xenopus laevis (African clawed frog).